A 297-amino-acid polypeptide reads, in one-letter code: Probable porphobilinogen deaminase (297 aa).

Position 241 is an S-(dipyrrolylmethanemethyl)cysteine (Cys-241).

This sequence belongs to the HMBS family. Dipyrromethane is required as a cofactor.

It carries out the reaction 4 porphobilinogen + H2O = hydroxymethylbilane + 4 NH4(+). Its pathway is porphyrin-containing compound metabolism; protoporphyrin-IX biosynthesis; coproporphyrinogen-III from 5-aminolevulinate: step 2/4. Its function is as follows. Tetrapolymerization of the monopyrrole PBG into the hydroxymethylbilane pre-uroporphyrinogen in several discrete steps. This chain is Probable porphobilinogen deaminase, found in Pyrobaculum arsenaticum (strain DSM 13514 / JCM 11321 / PZ6).